The primary structure comprises 454 residues: tRNA modification GTPase MnmE (454 aa).

(6S)-5-formyl-5,6,7,8-tetrahydrofolate contacts are provided by Arg23, Glu80, and Lys120. One can recognise a TrmE-type G domain in the interval 216–377 (GMKVVIAGRP…LRNHLKQSMG (162 aa)). Asn226 contacts K(+). GTP contacts are provided by residues 226–231 (NAGKSS), 245–251 (TDIAGTT), 270–273 (DTAG), 335–338 (NKAD), and 358–360 (SAR). Ser230 lines the Mg(2+) pocket. Residues Thr245, Ile247, and Thr250 each coordinate K(+). Thr251 is a Mg(2+) binding site. Lys454 lines the (6S)-5-formyl-5,6,7,8-tetrahydrofolate pocket.

It belongs to the TRAFAC class TrmE-Era-EngA-EngB-Septin-like GTPase superfamily. TrmE GTPase family. In terms of assembly, homodimer. Heterotetramer of two MnmE and two MnmG subunits. The cofactor is K(+).

The protein localises to the cytoplasm. Its function is as follows. Exhibits a very high intrinsic GTPase hydrolysis rate. Involved in the addition of a carboxymethylaminomethyl (cmnm) group at the wobble position (U34) of certain tRNAs, forming tRNA-cmnm(5)s(2)U34. This Escherichia coli O6:K15:H31 (strain 536 / UPEC) protein is tRNA modification GTPase MnmE.